A 171-amino-acid polypeptide reads, in one-letter code: 3-hydroxydecanoyl-[acyl-carrier-protein] dehydratase (171 aa).

The active site involves His70.

It belongs to the thioester dehydratase family. FabA subfamily. In terms of assembly, homodimer.

It is found in the cytoplasm. It catalyses the reaction a (3R)-hydroxyacyl-[ACP] = a (2E)-enoyl-[ACP] + H2O. The enzyme catalyses (3R)-hydroxydecanoyl-[ACP] = (2E)-decenoyl-[ACP] + H2O. It carries out the reaction (2E)-decenoyl-[ACP] = (3Z)-decenoyl-[ACP]. The protein operates within lipid metabolism; fatty acid biosynthesis. Its function is as follows. Necessary for the introduction of cis unsaturation into fatty acids. Catalyzes the dehydration of (3R)-3-hydroxydecanoyl-ACP to E-(2)-decenoyl-ACP and then its isomerization to Z-(3)-decenoyl-ACP. Can catalyze the dehydratase reaction for beta-hydroxyacyl-ACPs with saturated chain lengths up to 16:0, being most active on intermediate chain length. The chain is 3-hydroxydecanoyl-[acyl-carrier-protein] dehydratase from Shewanella sediminis (strain HAW-EB3).